The sequence spans 460 residues: NADH-ubiquinone oxidoreductase chain 4 (460 aa).

The next 13 helical transmembrane spans lie at 22 to 42, 61 to 81, 97 to 114, 118 to 140, 149 to 169, 196 to 216, 226 to 246, 259 to 279, 286 to 305, 309 to 331, 352 to 372, 395 to 415, and 437 to 457; these read WLWPTTLLHSLLIALASLSWL, PLSTPLLILSCWLLPLMILAS, YISLLTSLQFFLILAFSA, IMFYVMFEVTLIPTLILITRWGN, TYFLFYTLAGSLPLLVALLLL, IWWTGCILAFLVKMPLYGVHL, PIAGSMILAAVLLKLGGYGMM, LSYPFIILALWGVIMTGSICM, SLIAYSSVSHMGLVVGGILI, WGFTGALILMIAHGLTSSALFCL, MALPLMTAWWFIASLANLALP, IALTGLGMLITAGYSLYMFLM, and LLIALHLLPLLLLILKPELIW.

Belongs to the complex I subunit 4 family.

It localises to the mitochondrion membrane. It carries out the reaction a ubiquinone + NADH + 5 H(+)(in) = a ubiquinol + NAD(+) + 4 H(+)(out). Functionally, core subunit of the mitochondrial membrane respiratory chain NADH dehydrogenase (Complex I) that is believed to belong to the minimal assembly required for catalysis. Complex I functions in the transfer of electrons from NADH to the respiratory chain. The immediate electron acceptor for the enzyme is believed to be ubiquinone. The protein is NADH-ubiquinone oxidoreductase chain 4 (MT-ND4) of Tetraodon nigroviridis (Spotted green pufferfish).